Here is a 223-residue protein sequence, read N- to C-terminus: Cytolethal distending toxin subunit A (223 aa).

The first 15 residues, 1–15, serve as a signal peptide directing secretion; that stretch reads MKKFLPSLLLMGSVA. A lipid anchor (N-palmitoyl cysteine) is attached at Cys-16. The S-diacylglycerol cysteine moiety is linked to residue Cys-16. The tract at residues 20–48 is disordered; sequence QRMNDYSQPESQSDLAPKSSTIQPQPQPL. Residues 91–102 form a mediates binding to target cells region; the sequence is WALAKRNWLWAY. The region spanning 123-212 is the Ricin B-type lectin domain; the sequence is HREYFRFVNQ…EPSRDQTWYL (90 aa).

As to quaternary structure, heterotrimer of 3 subunits, CdtA, CdtB and CdtC.

It is found in the cell outer membrane. Its function is as follows. CDTs are cytotoxins which induce host cell distension, growth arrest in G2/M phase, nucleus swelling, and chromatin fragmentation in HeLa cells. CdtA, along with CdtC, probably forms a heterodimeric subunit required for the delivery of CdtB. In Haemophilus ducreyi (strain 35000HP / ATCC 700724), this protein is Cytolethal distending toxin subunit A (cdtA).